A 499-amino-acid chain; its full sequence is DAZ protein 1 (499 aa).

A disordered region spans residues 1 to 29; the sequence is MMSPPLRYQKDQQNQQHQQNQSQQAAHQM. Residues 12–28 are compositionally biased toward low complexity; it reads QQNQQHQQNQSQQAAHQ. The 79-residue stretch at 66 to 144 folds into the RRM domain; sequence PNRIFVGGFP…SRKLNLGPAI (79 aa). The segment covering 195-224 has biased composition (low complexity); sequence FVYPPLRSQDQSRQQSEQQTTPQNSPTNLQ. Disordered stretches follow at residues 195–304 and 406–499; these read FVYP…NNGG and YPGN…TKNN. The region spanning 214 to 236 is the DAZ domain; that stretch reads TTPQNSPTNLQHQQSPQVFFGGD. The segment covering 251–262 has biased composition (basic and acidic residues); that stretch reads EKSEVSPEKHES. Polar residues predominate over residues 263–279; the sequence is VSPQPLLPNQNVLNTQY. Low complexity predominate over residues 280 to 304; it reads SQGQQQWNSNVQQQQQQQMDSNNGG. Polar residues predominate over residues 406–425; sequence YPGNFSQQHTMGNNENTFSL. Over residues 438–447 the composition is skewed to basic and acidic residues; that stretch reads KPSECQDKKT. A compositionally biased stretch (low complexity) spans 480–499; the sequence is LSPLSASLQSLAISSPTKNN.

Belongs to the RRM DAZ family. Germline specific. More strongly expressed during oogenesis than during spermatogenesis. During the larval stages, it is more abundant at the distal region than the proximal region of the gonad. In young adult hermaphrodites, it is expressed at a very low level in the distal mitotic region of the gonad, and begins to accumulate in the meiotic transition zone. Highly expressed in the proximal pachytene region. Not expressed in mature oocytes. Not expressed in the spermatheca. Weakly or not expressed in the germline of adult males.

RNA-binding protein that plays a central role in oogenesis, but not for spermatogenesis. Required for meiotic entry and germline differentiation, at the pachytene stage of meiosis I of female germline regardless of the sex of the soma. May act by regulating translation of specific mRNAs, possibly by binding to their 3'-UTR. This chain is DAZ protein 1 (daz-1), found in Caenorhabditis elegans.